Consider the following 946-residue polypeptide: Bifunctional glutamine synthetase adenylyltransferase/adenylyl-removing enzyme (946 aa).

An adenylyl removase region spans residues 1 to 440 (MKPLSSPLQQ…VFNELIGDDE (440 aa)). Residues 449 to 946 (SEQWRELWQD…ASWQKWLVEE (498 aa)) are adenylyl transferase.

The protein belongs to the GlnE family. Mg(2+) serves as cofactor.

The catalysed reaction is [glutamine synthetase]-O(4)-(5'-adenylyl)-L-tyrosine + phosphate = [glutamine synthetase]-L-tyrosine + ADP. The enzyme catalyses [glutamine synthetase]-L-tyrosine + ATP = [glutamine synthetase]-O(4)-(5'-adenylyl)-L-tyrosine + diphosphate. Its function is as follows. Involved in the regulation of glutamine synthetase GlnA, a key enzyme in the process to assimilate ammonia. When cellular nitrogen levels are high, the C-terminal adenylyl transferase (AT) inactivates GlnA by covalent transfer of an adenylyl group from ATP to specific tyrosine residue of GlnA, thus reducing its activity. Conversely, when nitrogen levels are low, the N-terminal adenylyl removase (AR) activates GlnA by removing the adenylyl group by phosphorolysis, increasing its activity. The regulatory region of GlnE binds the signal transduction protein PII (GlnB) which indicates the nitrogen status of the cell. The polypeptide is Bifunctional glutamine synthetase adenylyltransferase/adenylyl-removing enzyme (Escherichia coli O9:H4 (strain HS)).